The sequence spans 598 residues: Ceramide transfer protein (598 aa).

Over residues 1–11 the composition is skewed to polar residues; it reads MSDNQSWNSSG. The disordered stretch occupies residues 1–24; the sequence is MSDNQSWNSSGSEEDPETESGPPV. Residues 23–117 form the PH domain; sequence PVERCGVLSK…WIDAIEQHKT (95 aa). Ser126 carries the post-translational modification Phosphoserine. Ser132 carries the phosphoserine; by PKD modification. The residue at position 135 (Ser135) is a Phosphoserine. The interval 202 to 221 is disordered; it reads DDEDDFPTTRSDGDFLHNTN. A coiled-coil region spans residues 268 to 301; the sequence is KREESWQKRHDKEMEKRRRLEEAYKNAMAELKKK. Position 315 is a phosphoserine (Ser315). The FFAT motif lies at 321–327; sequence EFFDAVE. One can recognise an START domain in the interval 363-592; it reads GTHRFVQKVE…FTSYVQEKTA (230 aa). Residues Glu446, Gln467, Asn504, and Tyr553 each contribute to the an N-acylsphing-4-enine site.

As to quaternary structure, interacts with VAPA and VAPB. Interaction with VAPB is less efficient than with VAPA. Interacts (via FFAT motif) with the MOSPD2 (via MSP domain). Phosphorylation on Ser-132 decreases the affinity toward phosphatidylinositol 4-phosphate at Golgi membranes and reduces ceramide transfer activity. Inactivated by hyperphosphorylation of serine residues by CSNK1G2/CK1 that triggers dissociation from the Golgi complex, thus down-regulating ER-to-Golgi transport of ceramide and sphingomyelin synthesis.

It is found in the cytoplasm. The protein localises to the golgi apparatus. It localises to the endoplasmic reticulum. The catalysed reaction is N-hexadecanoylsphing-4-enine(in) = N-hexadecanoylsphing-4-enine(out). Functionally, shelters ceramides and diacylglycerol lipids inside its START domain and mediates the intracellular trafficking of ceramides and diacylglycerol lipids in a non-vesicular manner. The protein is Ceramide transfer protein (CERT1) of Cricetulus griseus (Chinese hamster).